A 526-amino-acid chain; its full sequence is Transcription factor kayak (526 aa).

2 disordered regions span residues 71–165 (PPLA…GTGG) and 178–221 (RNTN…NKQA). 2 stretches are compositionally biased toward low complexity: residues 78-87 (NNNNNNNNNG) and 133-153 (ISDTSSGATDSTSYQNGHMMG). Residues 154 to 165 (NSGGGNGGGTGG) are compositionally biased toward gly residues. The segment covering 178 to 187 (RNTNTSNSAT) has biased composition (polar residues). Residues 208–271 (EEKRRIRRER…NQLEYFLQAH (64 aa)) form the bZIP domain. The basic motif stretch occupies residues 210–229 (KRRIRRERNKQAAARCRKRR). Positions 236 to 264 (LTEEVELLEKRGENLKKEMELLNETKNQL) are leucine-zipper. Over residues 301-322 (GSCGSGSSHHNNNSNSNDSSSG) the composition is skewed to low complexity. Disordered stretches follow at residues 301–345 (GSCG…DLKP) and 504–526 (TSQNKHPLELPTPTTEPSKLVSL). The segment covering 330–340 (TLNSTGRSNSP) has biased composition (polar residues). Position 339 is a phosphoserine (Ser339).

The protein belongs to the bZIP family. Fos subfamily. In terms of assembly, homodimer. Heterodimer with Jra. The kay-Jra heterodimer binds more stably to the AP-1 site than either of the two proteins alone.

It is found in the nucleus. In terms of biological role, developmentally regulated transcription factor AP-1 binds and recognizes the enhancer DNA sequence: 5'-TGA[CG]TCA-3'. May play a role in the function or determination of a particular subset of cells in the developing embryo. It is able to carry out its function either independently of or in conjunction with Jra. The polypeptide is Transcription factor kayak (Drosophila persimilis (Fruit fly)).